Reading from the N-terminus, the 161-residue chain is ATP synthase subunit b 1 (161 aa).

The helical transmembrane segment at 3–23 (FDASFFALVGLVLFFVLIAYL) threads the bilayer.

The protein belongs to the ATPase B chain family. F-type ATPases have 2 components, F(1) - the catalytic core - and F(0) - the membrane proton channel. F(1) has five subunits: alpha(3), beta(3), gamma(1), delta(1), epsilon(1). F(0) has three main subunits: a(1), b(2) and c(10-14). The alpha and beta chains form an alternating ring which encloses part of the gamma chain. F(1) is attached to F(0) by a central stalk formed by the gamma and epsilon chains, while a peripheral stalk is formed by the delta and b chains.

The protein localises to the cell inner membrane. Functionally, f(1)F(0) ATP synthase produces ATP from ADP in the presence of a proton or sodium gradient. F-type ATPases consist of two structural domains, F(1) containing the extramembraneous catalytic core and F(0) containing the membrane proton channel, linked together by a central stalk and a peripheral stalk. During catalysis, ATP synthesis in the catalytic domain of F(1) is coupled via a rotary mechanism of the central stalk subunits to proton translocation. Its function is as follows. Component of the F(0) channel, it forms part of the peripheral stalk, linking F(1) to F(0). The protein is ATP synthase subunit b 1 of Agrobacterium fabrum (strain C58 / ATCC 33970) (Agrobacterium tumefaciens (strain C58)).